A 529-amino-acid polypeptide reads, in one-letter code: Kunitz-type protease inhibitor 1 (529 aa).

Positions 1-35 are cleaved as a signal peptide; the sequence is MAPARTMARARLAPAGIPAVALWLLCTLGLQGTQA. Residues 57–140 form the MANSC domain; it reads GVPGFVLDTN…FAPREGFINY (84 aa). N66 and N235 each carry an N-linked (GlcNAc...) asparagine glycan. A BPTI/Kunitz inhibitor 1 domain is found at 250 to 300; that stretch reads CLASNKVGRCRGSFPRWYYDPTEQICKSFVYGGCLGNKNNYLREEECILAC. 9 cysteine pairs are disulfide-bonded: C250-C300, C259-C283, C275-C296, C335-C347, C342-C360, C354-C369, C391-C441, C400-C424, and C416-C437. The LDL-receptor class A domain maps to 334-370; the sequence is TCQPTQFRCSNGCCIDSFLECDDTPNCPDASDEAACE. Residues 391-441 enclose the BPTI/Kunitz inhibitor 2 domain; the sequence is CVDLPDTGLCKESIPRWYYNPFSEHCARFTYGGCYGNKNNFEEEQQCLESC. N-linked (GlcNAc...) asparagine glycosylation occurs at N523.

Interacts with HGFAC. Interacts with TMPRSS13; the interaction promotes the phosphorylation and cell membrane localization of TMPRSS13.

The protein resides in the secreted. Its subcellular location is the cytoplasm. It localises to the cell membrane. In terms of biological role, inhibitor of HGFAC. Inhibits serine protease activity of ST14/matriptase in vitro. Inhibits serine protease activity of TMPRSS13, via the BPTI/Kunitz inhibitor 1 domain. In Homo sapiens (Human), this protein is Kunitz-type protease inhibitor 1 (SPINT1).